Consider the following 272-residue polypeptide: Bis(5'-nucleosyl)-tetraphosphatase, symmetrical (272 aa).

It belongs to the Ap4A hydrolase family.

The catalysed reaction is P(1),P(4)-bis(5'-adenosyl) tetraphosphate + H2O = 2 ADP + 2 H(+). Hydrolyzes diadenosine 5',5'''-P1,P4-tetraphosphate to yield ADP. The polypeptide is Bis(5'-nucleosyl)-tetraphosphatase, symmetrical (Glaesserella parasuis serovar 5 (strain SH0165) (Haemophilus parasuis)).